A 205-amino-acid polypeptide reads, in one-letter code: FMN reductase (NADH) RutF (205 aa).

The segment at 171–205 is disordered; the sequence is PRAPRSGSAPAEPARAARALGARPAEGPALALRSA.

The protein belongs to the non-flavoprotein flavin reductase family. RutF subfamily.

It carries out the reaction FMNH2 + NAD(+) = FMN + NADH + 2 H(+). In terms of biological role, catalyzes the reduction of FMN to FMNH2 which is used to reduce pyrimidine by RutA via the Rut pathway. The sequence is that of FMN reductase (NADH) RutF from Methylorubrum extorquens (strain DSM 6343 / CIP 106787 / DM4) (Methylobacterium extorquens).